Here is a 1086-residue protein sequence, read N- to C-terminus: ATP-dependent helicase/deoxyribonuclease subunit B (1086 aa).

This sequence belongs to the helicase family. AddB/RexB type 2 subfamily. Heterodimer of AddA and RexB. The cofactor is Mg(2+).

The heterodimer acts as both an ATP-dependent DNA helicase and an ATP-dependent, dual-direction single-stranded exonuclease. Recognizes the chi site generating a DNA molecule suitable for the initiation of homologous recombination. This subunit has 5' -&gt; 3' nuclease activity but not helicase activity. This chain is ATP-dependent helicase/deoxyribonuclease subunit B, found in Streptococcus uberis (strain ATCC BAA-854 / 0140J).